We begin with the raw amino-acid sequence, 668 residues long: Probable ATP-dependent RNA helicase ddx52 (668 aa).

A disordered region spans residues 37–174 (KQTKTNNKVH…TQEDKHKREI (138 aa)). Residues 40–57 (KTNNKVHFFKNTTPSTPV) show a composition bias toward polar residues. The segment covering 59 to 69 (SKKDNIKQKKE) has biased composition (basic and acidic residues). The span at 70–108 (EEEDNDNDNEESKEDDDFVEDDDNDDDDDDDDEDEENEE) shows a compositional bias: acidic residues. Residues 109 to 120 (PKEKEFIKHQVN) show a composition bias toward basic and acidic residues. Residues 138–147 (ENSDDSDDSD) are compositionally biased toward acidic residues. Residues 161–174 (VSKETQEDKHKREI) show a composition bias toward basic and acidic residues. A Q motif motif is present at residues 199–227 (QLENRFKVRKYLLNNINEIGYKEPSPIQM). Positions 230–402 (IPILLKEREV…HSIMKNPIKI (173 aa)) constitute a Helicase ATP-binding domain. 243–250 (APTGSGKT) contacts ATP. The DEAD box signature appears at 349 to 352 (DEAD). In terms of domain architecture, Helicase C-terminal spans 413–574 (TVDQKLIYVG…HVPDWMLNLK (162 aa)). The disordered stretch occupies residues 601 to 668 (RTSSKFKLRK…KQIKKPKKII (68 aa)). Positions 604–613 (SKFKLRKNKK) are enriched in basic residues. Positions 624–636 (SNENNNNNNNNNN) are enriched in low complexity. Basic residues predominate over residues 659-668 (KQIKKPKKII).

The protein belongs to the DEAD box helicase family. DDX52/ROK1 subfamily.

The protein resides in the nucleus. It is found in the nucleolus. It catalyses the reaction ATP + H2O = ADP + phosphate + H(+). Functionally, ATP-binding RNA helicase which may be involved in the ribosome biogenesis. The protein is Probable ATP-dependent RNA helicase ddx52 (ddx52) of Dictyostelium discoideum (Social amoeba).